The primary structure comprises 974 residues: Receptor-like protein 7 (974 aa).

The N-terminal stretch at 1–24 is a signal peptide; the sequence is MSFLIRSICFLILIPSFLITFVSA. Topologically, residues 25–930 are extracellular; that stretch reads TQHLCHSDQK…EEEEEESFSW (906 aa). 2 N-linked (GlcNAc...) asparagine glycosylation sites follow: N54 and N90. LRR repeat units lie at residues 96 to 120, 122 to 145, 147 to 166, 181 to 204, 206 to 229, and 230 to 252; these read LRHL…EFDK, TGLE…LLQL, KLVS…SFHY, LRNL…EFSN, RSLR…ILLI, and PNLQ…VFHE. N-linked (GlcNAc...) asparagine glycosylation occurs at N253. LRR repeat units lie at residues 254 to 277, 278 to 301, 302 to 325, 327 to 349, and 350 to 373; these read NSLL…ISSL, KNLT…LGNL, SHLS…IGNL, QLTN…LSNL, and TKLN…ISQL. N-linked (GlcNAc...) asparagine glycosylation is found at N279 and N300. Residue N348 is glycosylated (N-linked (GlcNAc...) asparagine). Residues 374–396 form an LRR 12; degenerate repeat; that stretch reads SKLKFFFADDNPFIGAILSPLLK. LRR repeat units lie at residues 397 to 422, 425 to 448, 454 to 472, 473 to 495, 496 to 519, 521 to 542, 544 to 570, 572 to 589, 590 to 616, 618 to 638, 639 to 662, 664 to 685, 687 to 712, 713 to 737, 785 to 809, 810 to 833, 834 to 857, and 859 to 882; these read IPSL…IFML, LETF…VFSS, TLYI…SDFP, SNLE…IRKG, RNLQ…LWRM, TLNS…VKAS, ESQL…SLRY, SGSN…ICGL, SSLE…LMSS, SDLD…FMNA, TKLR…LTGC, SLEV…ELNS, QKLQ…VWFG, FPQL…YFMN, LTIY…IGLL, KELR…LANL, KNLE…LGTL, and SLAW…QFQR. N-linked (GlcNAc...) asparagine glycans are attached at residues N434, N466, and N484. Residue N529 is glycosylated (N-linked (GlcNAc...) asparagine). 4 N-linked (GlcNAc...) asparagine glycosylation sites follow: N577, N603, N624, and N637. N737 carries N-linked (GlcNAc...) asparagine glycosylation. N-linked (GlcNAc...) asparagine glycosylation is found at N816, N845, and N864. Positions 899-923 are disordered; it reads LENVCGHIKESTPTQTEPLETKEEE. The chain crosses the membrane as a helical span at residues 931–951; sequence IAAGLGFAPGVVFGLAMGYIV. At 952–974 the chain is on the cytoplasmic side; it reads VSYKHQWFMKTFGRSKQQNTRTR.

This sequence belongs to the RLP family.

Its subcellular location is the cell membrane. In Arabidopsis thaliana (Mouse-ear cress), this protein is Receptor-like protein 7.